We begin with the raw amino-acid sequence, 176 residues long: MADQKKVSEAAKEREIKISSSDNEIFLVPRNVIRLSNTINTLLMDLGLDDEEGTNAEPIPVQNVTASILKKVISWCNHHHSDPISTEDSDNREKRTDDIGSWDVEFLKVDQGTLFELILAANYLDIKGLLDVTCKTVANMIKGKSPEEIRRTFNIKNDFTPEEEEQIRKENAWCED.

Belongs to the SKP1 family. As to quaternary structure, probable component of the SCF(sel-10) E3 ubiquitin-protein ligase complex containing F-box domain-containing protein sel-10 as the substrate recognition component. Interacts with cul-1. May interact with the F-box protein mec-15. Interacts with dre-1. Interacts with syg-1. Interacts with sel-10. In terms of tissue distribution, ubiquitously expressed in the adult.

Its function is as follows. Probable essential component of SCF (SKP1-CUL1-F-box protein) E3 ubiquitin-protein ligase complexes, which mediate the ubiquitination and subsequent proteasomal degradation of target proteins. Regulates cell proliferation during embryonic and larval development. Involved in synapse elimination in early synapse development. May negatively regulate the apoptotic activity of cep-1 in response to genotoxic stress. Plays a role in sex determination. This chain is Skp1-related protein, found in Caenorhabditis elegans.